We begin with the raw amino-acid sequence, 204 residues long: Movement protein TGB2 (204 aa).

The Cytoplasmic portion of the chain corresponds to 1–11 (MKTTVGSRPNK). Residues 12-32 (YWPIVAGIGVVGLFAYLIFSN) traverse the membrane as a helical segment. Topologically, residues 33 to 72 (QKHSTESGDNIHKFANGGSYRDGSKSISYNRNHPFAYGNA) are lumenal. The chain crosses the membrane as a helical span at residues 73-93 (SSPGMLLPAMLTIIGIISYLW). Residues 94-204 (RTRDSVLGDS…RFNQCFEYSS (111 aa)) are Cytoplasmic-facing.

The protein belongs to the virgaviridae/benyvirus TGB2 movement protein family. As to quaternary structure, interacts with movement protein TGB3. TGB1-TGB3-TGB2 complex formation is enhanced by ATP hydrolysis.

The protein localises to the host cell junction. It localises to the host plasmodesma. It is found in the host endoplasmic reticulum membrane. The protein resides in the host cytoplasm. Its subcellular location is the host cytoskeleton. In terms of biological role, participates in the transport of viral genome to neighboring plant cells directly through plasmodesmata, without any budding. TGBp2 and TGBp3 are necessary for intracellular delivery of TGBp1-containing vRNPs to plasmodesmata. Can gate plasmodesmata and increase their size exclusion limit. To a lesser extent than TGB3, induces host actin cytoskeleton network thickening, which probably plays a major role in virus cell-to-cell movement. The chain is Movement protein TGB2 from Barley stripe mosaic virus (BSMV).